Here is a 210-residue protein sequence, read N- to C-terminus: Redox-sensing transcriptional repressor Rex (210 aa).

Positions 17 to 56 form a DNA-binding region, H-T-H motif; the sequence is KYHRYLYELLKNDVDRISSKELSEKIGFTASQIRQDLNCF. 91 to 96 contributes to the NAD(+) binding site; that stretch reads GAGNIG.

It belongs to the transcriptional regulatory Rex family. In terms of assembly, homodimer.

The protein resides in the cytoplasm. Functionally, modulates transcription in response to changes in cellular NADH/NAD(+) redox state. The polypeptide is Redox-sensing transcriptional repressor Rex (Clostridium botulinum (strain ATCC 19397 / Type A)).